The primary structure comprises 158 residues: Transcriptional repressor NrdR (158 aa).

The segment at 3 to 34 is a zinc-finger region; it reads CPSCQNTDSRVLESRAADGGRSVRRRRECLNC. Positions 49 to 139 constitute an ATP-cone domain; the sequence is ITVIKRDGCR…VYRQFRGIDD (91 aa).

This sequence belongs to the NrdR family. The cofactor is Zn(2+).

Negatively regulates transcription of bacterial ribonucleotide reductase nrd genes and operons by binding to NrdR-boxes. The chain is Transcriptional repressor NrdR from Synechococcus sp. (strain CC9902).